An 83-amino-acid chain; its full sequence is Cytochrome b559 subunit alpha (83 aa).

A helical transmembrane segment spans residues 21–35 (VIHSITIPSLFIAGW). Residue His23 coordinates heme.

Belongs to the PsbE/PsbF family. In terms of assembly, heterodimer of an alpha subunit and a beta subunit. PSII is composed of 1 copy each of membrane proteins PsbA, PsbB, PsbC, PsbD, PsbE, PsbF, PsbH, PsbI, PsbJ, PsbK, PsbL, PsbM, PsbT, PsbX, PsbY, PsbZ, Psb30/Ycf12, at least 3 peripheral proteins of the oxygen-evolving complex and a large number of cofactors. It forms dimeric complexes. It depends on heme b as a cofactor.

The protein resides in the plastid. Its subcellular location is the chloroplast thylakoid membrane. This b-type cytochrome is tightly associated with the reaction center of photosystem II (PSII). PSII is a light-driven water:plastoquinone oxidoreductase that uses light energy to abstract electrons from H(2)O, generating O(2) and a proton gradient subsequently used for ATP formation. It consists of a core antenna complex that captures photons, and an electron transfer chain that converts photonic excitation into a charge separation. The chain is Cytochrome b559 subunit alpha from Anthoceros angustus (Hornwort).